Reading from the N-terminus, the 155-residue chain is SsrA-binding protein (155 aa).

The segment at 132-155 is disordered; sequence DKREDLKQKQMKRDVDRAIKDHMR.

It belongs to the SmpB family.

The protein localises to the cytoplasm. Functionally, required for rescue of stalled ribosomes mediated by trans-translation. Binds to transfer-messenger RNA (tmRNA), required for stable association of tmRNA with ribosomes. tmRNA and SmpB together mimic tRNA shape, replacing the anticodon stem-loop with SmpB. tmRNA is encoded by the ssrA gene; the 2 termini fold to resemble tRNA(Ala) and it encodes a 'tag peptide', a short internal open reading frame. During trans-translation Ala-aminoacylated tmRNA acts like a tRNA, entering the A-site of stalled ribosomes, displacing the stalled mRNA. The ribosome then switches to translate the ORF on the tmRNA; the nascent peptide is terminated with the 'tag peptide' encoded by the tmRNA and targeted for degradation. The ribosome is freed to recommence translation, which seems to be the essential function of trans-translation. The protein is SsrA-binding protein of Oceanobacillus iheyensis (strain DSM 14371 / CIP 107618 / JCM 11309 / KCTC 3954 / HTE831).